The primary structure comprises 357 residues: Tribbles homolog 3 (357 aa).

Residues 1–63 form a disordered region; it reads MRASPLAVPA…PAPVHAPDVT (63 aa). Residues 1 to 127 are interaction with DDIT3/CHOP; sequence MRASPLAVPA…GHVARPAEVL (127 aa). In terms of domain architecture, Protein kinase spans 68-316; the sequence is LGPYVLLEPE…SGILLHPWLR (249 aa). The interval 333–357 is disordered; sequence DQVVPEGPGLEEAEEEGERDMGLYG. A compositionally biased stretch (acidic residues) spans 341 to 350; that stretch reads GLEEAEEEGE.

It belongs to the protein kinase superfamily. CAMK Ser/Thr protein kinase family. Tribbles subfamily. As to quaternary structure, interacts with AKT1, AKT2, MAP2K1 and MAP2K7. Interacts with ATF4. Interacts with DDIT3/CHOP and inhibits its interaction with EP300/P300. Interacts with APOBEC3C. Interacts (via N-terminus) with APOBEC3A. Interacts with RELA.

It localises to the nucleus. In terms of biological role, inactive protein kinase which acts as a regulator of the integrated stress response (ISR), a process for adaptation to various stress. Inhibits the transcriptional activity of DDIT3/CHOP and is involved in DDIT3/CHOP-dependent cell death during ER stress. May play a role in programmed neuronal cell death but does not appear to affect non-neuronal cells. Acts as a negative feedback regulator of the ATF4-dependent transcription during the ISR: while TRIB3 expression is promoted by ATF4, TRIB3 protein interacts with ATF4 and inhibits ATF4 transcription activity. Disrupts insulin signaling by binding directly to Akt kinases and blocking their activation. May bind directly to and mask the 'Thr-308' phosphorylation site in AKT1. Interacts with the NF-kappa-B transactivator p65 RELA and inhibits its phosphorylation and thus its transcriptional activation activity. Interacts with MAPK kinases and regulates activation of MAP kinases. Can inhibit APOBEC3A editing of nuclear DNA. The polypeptide is Tribbles homolog 3 (TRIB3) (Bos taurus (Bovine)).